The primary structure comprises 620 residues: Chaperone protein HscA homolog (620 aa).

It belongs to the heat shock protein 70 family.

Functionally, chaperone involved in the maturation of iron-sulfur cluster-containing proteins. Has a low intrinsic ATPase activity which is markedly stimulated by HscB. In Shewanella sp. (strain ANA-3), this protein is Chaperone protein HscA homolog.